Here is a 447-residue protein sequence, read N- to C-terminus: MTKQIIALVGRPNVGKSTLFNRLSIRKKAIVHNLPGVTRDRKYTDGKIGSCEFLLIDTPGLEENPNSMSVRLMEQTTKAILEADLICFMVDCRSGILPDDKLLSSFIRKYNKPAILVVNKCEKAFDFDKEYYQLGFDSMVAISAEHGTGLIDLYDEIIAKLPKEKSIETNIADPVKGDCVQIVISGRPNAGKSTFINALINDERLLTGPEAGITRESIEIDWQYKNNHIKLIDTAGLRKKSTITESLDKLSASDAINSIKFANTVILIIDALSPLKQQDLNIASYVANEGRSIVIVVNKWDLVKESEKEAFQEEFYYQINTHLPQIKGVSVLFISAINKQNIEQVLDACLTIYKNWNKKITTSKLNEWLNFTTEAHPLPLQKGGKRVRIKYMTQIKTRPPTFKLFSNNPEKITNSYTRYLVNNMREAFDMPGIPIRFAYVKTKNPYV.

EngA-type G domains lie at 4-165 (QIIA…PKEK) and 180-357 (VQIV…KNWN). GTP is bound by residues 10–17 (GRPNVGKS), 57–61 (DTPGL), 119–122 (NKCE), 186–193 (GRPNAGKS), 233–237 (DTAGL), and 298–301 (NKWD). Positions 358-443 (KKITTSKLNE…PIRFAYVKTK (86 aa)) constitute a KH-like domain.

The protein belongs to the TRAFAC class TrmE-Era-EngA-EngB-Septin-like GTPase superfamily. EngA (Der) GTPase family. As to quaternary structure, associates with the 50S ribosomal subunit.

GTPase that plays an essential role in the late steps of ribosome biogenesis. In Rickettsia canadensis (strain McKiel), this protein is GTPase Der.